Consider the following 767-residue polypeptide: Photosystem I P700 chlorophyll a apoprotein A1 (767 aa).

A run of 8 helical transmembrane segments spans residues 72–95 (IFSA…FHGA), 158–181 (LMAL…FHYH), 197–221 (LNHH…HVSL), 305–323 (IAHH…GHMY), 364–387 (WHAQ…QHMY), 403–429 (IGLF…IAMV), 451–473 (AIIS…LYIH), and 548–566 (FMVH…LILL). The [4Fe-4S] cluster site is built by cysteine 590 and cysteine 599. 2 consecutive transmembrane segments (helical) span residues 606–627 (HVFL…HFSW) and 681–703 (TSAY…MFLF). Histidine 692 lines the chlorophyll a' pocket. Residues methionine 700 and tyrosine 708 each coordinate chlorophyll a. Tryptophan 709 is a phylloquinone binding site. The helical transmembrane segment at 741 to 761 (AVGVAHYLLGGIATTWAFFHA) threads the bilayer.

This sequence belongs to the PsaA/PsaB family. As to quaternary structure, the PsaA/B heterodimer binds the P700 chlorophyll special pair and subsequent electron acceptors. PSI consists of a core antenna complex that captures photons, and an electron transfer chain that converts photonic excitation into a charge separation. The cyanobacterial PSI reaction center is composed of one copy each of PsaA,B,C,D,E,F,I,J,K,L,M and X, and forms trimeric complexes. Requires PSI electron transfer chain: 5 chlorophyll a, 1 chlorophyll a', 2 phylloquinones and 3 4Fe-4S clusters. PSI core antenna: 90 chlorophyll a, 22 carotenoids, 3 phospholipids and 1 galactolipid. P700 is a chlorophyll a/chlorophyll a' dimer, A0 is one or more chlorophyll a, A1 is one or both phylloquinones and FX is a shared 4Fe-4S iron-sulfur center. as cofactor.

Its subcellular location is the cellular thylakoid membrane. It catalyses the reaction reduced [plastocyanin] + hnu + oxidized [2Fe-2S]-[ferredoxin] = oxidized [plastocyanin] + reduced [2Fe-2S]-[ferredoxin]. Its function is as follows. PsaA and PsaB bind P700, the primary electron donor of photosystem I (PSI), as well as the electron acceptors A0, A1 and FX. PSI is a plastocyanin/cytochrome c6-ferredoxin oxidoreductase, converting photonic excitation into a charge separation, which transfers an electron from the donor P700 chlorophyll pair to the spectroscopically characterized acceptors A0, A1, FX, FA and FB in turn. Oxidized P700 is reduced on the lumenal side of the thylakoid membrane by plastocyanin or cytochrome c6. The chain is Photosystem I P700 chlorophyll a apoprotein A1 from Synechococcus sp. (strain CC9902).